Reading from the N-terminus, the 273-residue chain is Ribosomal RNA small subunit methyltransferase A (273 aa).

S-adenosyl-L-methionine is bound by residues Asn18, Leu20, Gly45, Glu66, Asp91, and Asn113.

This sequence belongs to the class I-like SAM-binding methyltransferase superfamily. rRNA adenine N(6)-methyltransferase family. RsmA subfamily.

The protein resides in the cytoplasm. It carries out the reaction adenosine(1518)/adenosine(1519) in 16S rRNA + 4 S-adenosyl-L-methionine = N(6)-dimethyladenosine(1518)/N(6)-dimethyladenosine(1519) in 16S rRNA + 4 S-adenosyl-L-homocysteine + 4 H(+). In terms of biological role, specifically dimethylates two adjacent adenosines (A1518 and A1519) in the loop of a conserved hairpin near the 3'-end of 16S rRNA in the 30S particle. May play a critical role in biogenesis of 30S subunits. This chain is Ribosomal RNA small subunit methyltransferase A, found in Shigella boydii serotype 4 (strain Sb227).